We begin with the raw amino-acid sequence, 228 residues long: Response regulator MprA (228 aa).

In terms of domain architecture, Response regulatory spans 2 to 116 (RILAVDDDRA…ELLARIRALL (115 aa)). Aspartate 46 carries the 4-aspartylphosphate modification. Positions 127-225 (SVAMSFSDLT…VRGVGYVLRE (99 aa)) form a DNA-binding region, ompR/PhoB-type.

Phosphorylated and dephosphorylated by MprB.

The protein localises to the cytoplasm. In terms of biological role, member of the two-component regulatory system MprB/MprA which contributes to maintaining a balance among several systems involved in stress resistance and is required for establishment and maintenance of persistent infection in the host. Functions as a transcriptional regulator that recognizes a 19-bp nucleotide motif comprizing two loosely conserved 8-bp direct DNA-binding motif repeats separated by a 3-bp spacer region. The chain is Response regulator MprA (mprA) from Mycobacterium leprae (strain TN).